A 157-amino-acid polypeptide reads, in one-letter code: UPF0251 protein CLM_1546 (157 aa).

Belongs to the UPF0251 family.

This is UPF0251 protein CLM_1546 from Clostridium botulinum (strain Kyoto / Type A2).